Consider the following 1487-residue polypeptide: Golgin subfamily A member 3 (1487 aa).

Met-1 is subject to N-acetylmethionine. Residues 1–118 form a disordered region; sequence MDGASAKQDG…GTSAEGSVRK (118 aa). A phosphoserine mark is found at Ser-18 and Ser-60. Polar residues predominate over residues 62 to 74; that stretch reads DRSSQVAICQNGQ. An interaction with GOPC region spans residues 121-141; the sequence is LQSLRLSLPMQETQLCSTASS. The interval 172–257 is golgi-targeting domain; it reads ERSSQPATKM…DYRTEDPSDS (86 aa). 2 disordered regions span residues 221-321 and 365-394; these read PKVG…SSLS and AAQH…SMES. 3 stretches are compositionally biased toward low complexity: residues 269-288, 312-321, and 365-375; these read SSLK…SPSS, SDSSSHSSLS, and AAQHQDQNQEA. Phosphoserine is present on Ser-270. A coiled-coil region spans residues 358-1454; the sequence is KDVLQAAAAQ…TITVHESLSS (1097 aa). Phosphoserine occurs at positions 381, 385, and 461. The span at 785-796 shows a compositional bias: basic and acidic residues; it reads KEELDRGARRLE. The segment at 785–804 is disordered; that stretch reads KEELDRGARRLEEDTEETSG. Ser-979 carries the phosphoserine modification. A compositionally biased stretch (basic and acidic residues) spans 1372–1382; that stretch reads RGAAKKKEPKG. Disordered regions lie at residues 1372–1396 and 1458–1487; these read RGAA…IKIP and VEAA…GLGQ. At Ser-1387 the chain carries Phosphoserine. Over residues 1462–1474 the composition is skewed to basic and acidic residues; it reads PAEHAHPRGDTKL. Ser-1479 carries the post-translational modification Phosphoserine.

In terms of assembly, homodimer. Interacts with GOLGA7. Interacts with GOPC. Post-translationally, cleaved by caspases in apoptotic cells. Highly expressed in testis. Transcripts can be found in spermatids during spermatogenesis. No expression in Leydig cells, spermatogonia or spermatocytes. Detected at low levels in all tissues.

The protein resides in the cytoplasm. It localises to the golgi apparatus. The protein localises to the golgi stack membrane. Plays an important role in spermatogenesis and/or testis development. Probably identical with the serologically detectable male antigen (SDM). Probably involved in maintaining Golgi structure. This Mus musculus (Mouse) protein is Golgin subfamily A member 3 (Golga3).